A 792-amino-acid chain; its full sequence is Phenylalanine--tRNA ligase beta subunit (792 aa).

One can recognise a tRNA-binding domain in the interval 39 to 147 (GESLGQVVVA…DDAPVGQALA (109 aa)). Residues 400–475 (PQPVHIRLRR…RIHGYDRVPT (76 aa)) enclose the B5 domain. Aspartate 453, aspartate 459, glutamate 462, and glutamate 463 together coordinate Mg(2+). The FDX-ACB domain maps to 698-791 (SRFPSVRRDL…IEREHRARIR (94 aa)).

Belongs to the phenylalanyl-tRNA synthetase beta subunit family. Type 1 subfamily. In terms of assembly, tetramer of two alpha and two beta subunits. The cofactor is Mg(2+).

It is found in the cytoplasm. The catalysed reaction is tRNA(Phe) + L-phenylalanine + ATP = L-phenylalanyl-tRNA(Phe) + AMP + diphosphate + H(+). The polypeptide is Phenylalanine--tRNA ligase beta subunit (Xanthomonas axonopodis pv. citri (strain 306)).